The primary structure comprises 348 residues: Holliday junction branch migration complex subunit RuvB (348 aa).

Positions 1–183 are large ATPase domain (RuvB-L); that stretch reads MTEASRIVAP…FGIPVRLNFY (183 aa). Residues L22, R23, G64, K67, T68, T69, 130–132, R173, Y183, and R220 contribute to the ATP site; that span reads EDF. Position 68 (T68) interacts with Mg(2+). Positions 184 to 254 are small ATPAse domain (RuvB-S); the sequence is TEDELEKIVS…VADHALGALE (71 aa). The interval 257-348 is head domain (RuvB-H); the sequence is AAGLDAMDRR…SGLFGQDEDR (92 aa). The DNA site is built by R293, R312, and R317. Positions 329–348 are disordered; that stretch reads LTEPSRDPAQSGLFGQDEDR.

The protein belongs to the RuvB family. As to quaternary structure, homohexamer. Forms an RuvA(8)-RuvB(12)-Holliday junction (HJ) complex. HJ DNA is sandwiched between 2 RuvA tetramers; dsDNA enters through RuvA and exits via RuvB. An RuvB hexamer assembles on each DNA strand where it exits the tetramer. Each RuvB hexamer is contacted by two RuvA subunits (via domain III) on 2 adjacent RuvB subunits; this complex drives branch migration. In the full resolvosome a probable DNA-RuvA(4)-RuvB(12)-RuvC(2) complex forms which resolves the HJ.

The protein localises to the cytoplasm. It carries out the reaction ATP + H2O = ADP + phosphate + H(+). Functionally, the RuvA-RuvB-RuvC complex processes Holliday junction (HJ) DNA during genetic recombination and DNA repair, while the RuvA-RuvB complex plays an important role in the rescue of blocked DNA replication forks via replication fork reversal (RFR). RuvA specifically binds to HJ cruciform DNA, conferring on it an open structure. The RuvB hexamer acts as an ATP-dependent pump, pulling dsDNA into and through the RuvAB complex. RuvB forms 2 homohexamers on either side of HJ DNA bound by 1 or 2 RuvA tetramers; 4 subunits per hexamer contact DNA at a time. Coordinated motions by a converter formed by DNA-disengaged RuvB subunits stimulates ATP hydrolysis and nucleotide exchange. Immobilization of the converter enables RuvB to convert the ATP-contained energy into a lever motion, pulling 2 nucleotides of DNA out of the RuvA tetramer per ATP hydrolyzed, thus driving DNA branch migration. The RuvB motors rotate together with the DNA substrate, which together with the progressing nucleotide cycle form the mechanistic basis for DNA recombination by continuous HJ branch migration. Branch migration allows RuvC to scan DNA until it finds its consensus sequence, where it cleaves and resolves cruciform DNA. The sequence is that of Holliday junction branch migration complex subunit RuvB from Nitrobacter winogradskyi (strain ATCC 25391 / DSM 10237 / CIP 104748 / NCIMB 11846 / Nb-255).